The chain runs to 278 residues: Pyrroline-5-carboxylate reductase 2 (278 aa).

The protein belongs to the pyrroline-5-carboxylate reductase family.

It is found in the cytoplasm. It carries out the reaction L-proline + NADP(+) = (S)-1-pyrroline-5-carboxylate + NADPH + 2 H(+). It catalyses the reaction L-proline + NAD(+) = (S)-1-pyrroline-5-carboxylate + NADH + 2 H(+). It participates in amino-acid biosynthesis; L-proline biosynthesis; L-proline from L-glutamate 5-semialdehyde: step 1/1. Functionally, catalyzes the reduction of 1-pyrroline-5-carboxylate (PCA) to L-proline. In Bacillus subtilis (strain 168), this protein is Pyrroline-5-carboxylate reductase 2 (proI).